The chain runs to 132 residues: Agouti-signaling protein (132 aa).

The N-terminal stretch at 1-22 (MDVTRLLLATLLVFLCFFTADS) is a signal peptide. A glycan (N-linked (GlcNAc...) asparagine) is linked at asparagine 39. The segment at 62–85 (ISRKEAEKKRSSKKEASMKTVARP) is disordered. Positions 63 to 78 (SRKEAEKKRSSKKEAS) are enriched in basic and acidic residues. 5 disulfide bridges follow: cysteine 93–cysteine 108, cysteine 100–cysteine 114, cysteine 107–cysteine 125, cysteine 111–cysteine 132, and cysteine 116–cysteine 123. The Agouti domain maps to 93–132 (CVATRNSCKPPAPACCDPCASCQCRFFRSACSCRVLSLNC).

It is found in the secreted. Functionally, involved in the regulation of melanogenesis. The binding of ASP to MC1R precludes alpha-MSH initiated signaling and thus blocks production of cAMP, leading to a down-regulation of eumelanogenesis (brown/black pigment) and thus increasing synthesis of pheomelanin (yellow/red pigment). The protein is Agouti-signaling protein (ASIP) of Pongo pygmaeus (Bornean orangutan).